The sequence spans 144 residues: Large ribosomal subunit protein uL13 (144 aa).

The protein belongs to the universal ribosomal protein uL13 family. Part of the 50S ribosomal subunit.

This protein is one of the early assembly proteins of the 50S ribosomal subunit, although it is not seen to bind rRNA by itself. It is important during the early stages of 50S assembly. The chain is Large ribosomal subunit protein uL13 from Oleidesulfovibrio alaskensis (strain ATCC BAA-1058 / DSM 17464 / G20) (Desulfovibrio alaskensis).